Reading from the N-terminus, the 297-residue chain is MAGAASPDHLFGLRYSFYVGAYQAVITGVQAIPARAALSPDALAERDSLLYRSYIAIGSHQLVIDEIGPGAATPLQAVRLLAVYLSGGAGGKESAIRKLNELLADDAVGSNPILRLVAGTVLMHERDYAGALKHTNSGGTMELLAMNVQICLQMHRSDHAEKQLRIMQQLDEDHTLTQLANAWVDLVMGGSKIQEAHLIFQDLSEKYPATCLILNGKALCLMHMGNFEDAEGLLLESLNKDAKDAETLANLVVCSLNLGKSASRYLNQLKLAHPDHMLVKRMSSAEDSFDRACQAIS.

Belongs to the COPE family. Oligomeric complex that consists of at least the alpha, beta, beta', gamma, delta, epsilon and zeta subunits.

The protein localises to the cytoplasm. The protein resides in the golgi apparatus membrane. It is found in the cytoplasmic vesicle. It localises to the COPI-coated vesicle membrane. The coatomer is a cytosolic protein complex that binds to dilysine motifs and reversibly associates with Golgi non-clathrin-coated vesicles, which further mediate biosynthetic protein transport from the ER, via the Golgi up to the trans Golgi network. The coatomer complex is required for budding from Golgi membranes, and is essential for the retrograde Golgi-to-ER transport of dilysine-tagged proteins. This chain is Coatomer subunit epsilon-2, found in Oryza sativa subsp. indica (Rice).